Here is a 406-residue protein sequence, read N- to C-terminus: Tyrosine--tRNA ligase (406 aa).

Y35 contributes to the L-tyrosine binding site. Residues 40–49 (ATSTSLHIGH) carry the 'HIGH' region motif. 2 residues coordinate L-tyrosine: Y166 and Q170. The short motif at 226 to 230 (KMGKS) is the 'KMSKS' region element. ATP is bound at residue K229. The region spanning 341 to 405 (ILLIDLMVLS…IGKKRILRVI (65 aa)) is the S4 RNA-binding domain.

The protein belongs to the class-I aminoacyl-tRNA synthetase family. TyrS type 1 subfamily. Homodimer.

Its subcellular location is the cytoplasm. The catalysed reaction is tRNA(Tyr) + L-tyrosine + ATP = L-tyrosyl-tRNA(Tyr) + AMP + diphosphate + H(+). Catalyzes the attachment of tyrosine to tRNA(Tyr) in a two-step reaction: tyrosine is first activated by ATP to form Tyr-AMP and then transferred to the acceptor end of tRNA(Tyr). In Borrelia turicatae (strain 91E135), this protein is Tyrosine--tRNA ligase.